Consider the following 417-residue polypeptide: Tol-Pal system protein TolB (417 aa).

The first 16 residues, 1–16 (MKYLWLFLIYAIGLFA), serve as a signal peptide directing secretion.

This sequence belongs to the TolB family. The Tol-Pal system is composed of five core proteins: the inner membrane proteins TolA, TolQ and TolR, the periplasmic protein TolB and the outer membrane protein Pal. They form a network linking the inner and outer membranes and the peptidoglycan layer.

Its subcellular location is the periplasm. Functionally, part of the Tol-Pal system, which plays a role in outer membrane invagination during cell division and is important for maintaining outer membrane integrity. This chain is Tol-Pal system protein TolB, found in Helicobacter pylori (strain J99 / ATCC 700824) (Campylobacter pylori J99).